We begin with the raw amino-acid sequence, 331 residues long: MAKLFYDSDADLGLLQDKTVAIIGYGSQGHAHALNLKDSGIKVVVGLYEGSRSASKATSDGLEVLSVAEASERADWIMILLPDEFQKDVYSKEIAPHLKAGKILSFAHGFNIRFELIKPPEFVDVVMIAPKGPGHTVRWEYQNGQGVPALFAIEQDSSGNARALAMAYAKGIGGTRAGILETNFKEETETDLFGEQAVLCGGLSELVKAGFETLVEAGYQPELAYFECLHEVKLIVDLMVKGGLTAMRDSISNTAEYGDYVSGPRLITKETKEEMKNILADIQDGTFAKNFVKECDEGKPEMKRIRKKDSELPIEKVGKTLRSMFSWLKSD.

Residues 2 to 182 enclose the KARI N-terminal Rossmann domain; it reads AKLFYDSDAD…GGTRAGILET (181 aa). NADP(+) is bound by residues 25–28, serine 51, serine 53, and 83–86; these read YGSQ and DEFQ. Histidine 108 is an active-site residue. Position 134 (glycine 134) interacts with NADP(+). One can recognise a KARI C-terminal knotted domain in the interval 183-328; that stretch reads NFKEETETDL…KTLRSMFSWL (146 aa). Residues aspartate 191, glutamate 195, glutamate 227, and glutamate 231 each coordinate Mg(2+). Serine 252 lines the substrate pocket.

Belongs to the ketol-acid reductoisomerase family. It depends on Mg(2+) as a cofactor.

The catalysed reaction is (2R)-2,3-dihydroxy-3-methylbutanoate + NADP(+) = (2S)-2-acetolactate + NADPH + H(+). It catalyses the reaction (2R,3R)-2,3-dihydroxy-3-methylpentanoate + NADP(+) = (S)-2-ethyl-2-hydroxy-3-oxobutanoate + NADPH + H(+). Its pathway is amino-acid biosynthesis; L-isoleucine biosynthesis; L-isoleucine from 2-oxobutanoate: step 2/4. It participates in amino-acid biosynthesis; L-valine biosynthesis; L-valine from pyruvate: step 2/4. Its function is as follows. Involved in the biosynthesis of branched-chain amino acids (BCAA). Catalyzes an alkyl-migration followed by a ketol-acid reduction of (S)-2-acetolactate (S2AL) to yield (R)-2,3-dihydroxy-isovalerate. In the isomerase reaction, S2AL is rearranged via a Mg-dependent methyl migration to produce 3-hydroxy-3-methyl-2-ketobutyrate (HMKB). In the reductase reaction, this 2-ketoacid undergoes a metal-dependent reduction by NADPH to yield (R)-2,3-dihydroxy-isovalerate. This chain is Ketol-acid reductoisomerase (NADP(+)), found in Prochlorococcus marinus (strain NATL2A).